The sequence spans 137 residues: Ribosome-binding factor A (137 aa).

The protein belongs to the RbfA family. Monomer. Binds 30S ribosomal subunits, but not 50S ribosomal subunits or 70S ribosomes.

Its subcellular location is the cytoplasm. One of several proteins that assist in the late maturation steps of the functional core of the 30S ribosomal subunit. Associates with free 30S ribosomal subunits (but not with 30S subunits that are part of 70S ribosomes or polysomes). Required for efficient processing of 16S rRNA. May interact with the 5'-terminal helix region of 16S rRNA. In Rhodopseudomonas palustris (strain BisB18), this protein is Ribosome-binding factor A.